A 107-amino-acid polypeptide reads, in one-letter code: Integration host factor subunit beta (107 aa).

The segment at 76–107 is disordered; it reads FVPHFKPGKELRERVDGRAGEPLKADDPDDER. The span at 82 to 101 shows a compositional bias: basic and acidic residues; sequence PGKELRERVDGRAGEPLKAD.

This sequence belongs to the bacterial histone-like protein family. As to quaternary structure, heterodimer of an alpha and a beta chain.

This protein is one of the two subunits of integration host factor, a specific DNA-binding protein that functions in genetic recombination as well as in transcriptional and translational control. The polypeptide is Integration host factor subunit beta (Burkholderia cenocepacia (strain ATCC BAA-245 / DSM 16553 / LMG 16656 / NCTC 13227 / J2315 / CF5610) (Burkholderia cepacia (strain J2315))).